Reading from the N-terminus, the 397-residue chain is Elongation factor Tu (397 aa).

The tr-type G domain occupies 10 to 206 (KPHVNIGTIG…AIDSYIPTPE (197 aa)). The interval 19–26 (GHVDHGKT) is G1. 19-26 (GHVDHGKT) lines the GTP pocket. Mg(2+) is bound at residue threonine 26. The segment at 60 to 64 (GITIN) is G2. The segment at 81–84 (DCPG) is G3. GTP contacts are provided by residues 81–85 (DCPGH) and 136–139 (NKAD). A G4 region spans residues 136 to 139 (NKAD). The interval 174–176 (SAL) is G5.

This sequence belongs to the TRAFAC class translation factor GTPase superfamily. Classic translation factor GTPase family. EF-Tu/EF-1A subfamily. In terms of assembly, monomer.

It localises to the cytoplasm. The catalysed reaction is GTP + H2O = GDP + phosphate + H(+). Its function is as follows. GTP hydrolase that promotes the GTP-dependent binding of aminoacyl-tRNA to the A-site of ribosomes during protein biosynthesis. In Clostridium botulinum (strain Loch Maree / Type A3), this protein is Elongation factor Tu.